A 452-amino-acid chain; its full sequence is tRNA modification GTPase MnmE (452 aa).

(6S)-5-formyl-5,6,7,8-tetrahydrofolate is bound by residues R24, E81, and K120. Positions 217–373 (GIKTAIVGKT…LIMKIEQMHI (157 aa)) constitute a TrmE-type G domain. A K(+)-binding site is contributed by N227. Residues 227-232 (NVGKSS), 246-252 (TDIHGTT), and 271-274 (DTAG) each bind GTP. S231 is a binding site for Mg(2+). K(+)-binding residues include T246, I248, and T251. T252 lines the Mg(2+) pocket. Residue K452 participates in (6S)-5-formyl-5,6,7,8-tetrahydrofolate binding.

The protein belongs to the TRAFAC class TrmE-Era-EngA-EngB-Septin-like GTPase superfamily. TrmE GTPase family. As to quaternary structure, homodimer. Heterotetramer of two MnmE and two MnmG subunits. K(+) serves as cofactor.

It is found in the cytoplasm. Exhibits a very high intrinsic GTPase hydrolysis rate. Involved in the addition of a carboxymethylaminomethyl (cmnm) group at the wobble position (U34) of certain tRNAs, forming tRNA-cmnm(5)s(2)U34. The sequence is that of tRNA modification GTPase MnmE from Mesoplasma florum (strain ATCC 33453 / NBRC 100688 / NCTC 11704 / L1) (Acholeplasma florum).